Reading from the N-terminus, the 184-residue chain is ATP synthase subunit b, chloroplastic (184 aa).

The chain crosses the membrane as a helical span at residues 29–49 (TNLINLGVVLGLLVYFGKGVL).

The protein belongs to the ATPase B chain family. In terms of assembly, F-type ATPases have 2 components, F(1) - the catalytic core - and F(0) - the membrane proton channel. F(1) has five subunits: alpha(3), beta(3), gamma(1), delta(1), epsilon(1). F(0) has four main subunits: a(1), b(1), b'(1) and c(10-14). The alpha and beta chains form an alternating ring which encloses part of the gamma chain. F(1) is attached to F(0) by a central stalk formed by the gamma and epsilon chains, while a peripheral stalk is formed by the delta, b and b' chains.

It is found in the plastid. It localises to the chloroplast thylakoid membrane. Functionally, f(1)F(0) ATP synthase produces ATP from ADP in the presence of a proton or sodium gradient. F-type ATPases consist of two structural domains, F(1) containing the extramembraneous catalytic core and F(0) containing the membrane proton channel, linked together by a central stalk and a peripheral stalk. During catalysis, ATP synthesis in the catalytic domain of F(1) is coupled via a rotary mechanism of the central stalk subunits to proton translocation. In terms of biological role, component of the F(0) channel, it forms part of the peripheral stalk, linking F(1) to F(0). This is ATP synthase subunit b, chloroplastic from Anthoceros angustus (Hornwort).